Reading from the N-terminus, the 372-residue chain is Queuine tRNA-ribosyltransferase (372 aa).

The Proton acceptor role is filled by aspartate 92. Substrate-binding positions include 92-96, aspartate 146, glutamine 188, and glycine 215; that span reads DSGGF. Residues 246-252 form an RNA binding region; sequence GIGTLRE. Aspartate 265 serves as the catalytic Nucleophile. Residues 270 to 274 are RNA binding; important for wobble base 34 recognition; sequence TRLGR. Zn(2+) is bound by residues cysteine 303, cysteine 305, cysteine 308, and histidine 334.

This sequence belongs to the queuine tRNA-ribosyltransferase family. In terms of assembly, homodimer. Within each dimer, one monomer is responsible for RNA recognition and catalysis, while the other monomer binds to the replacement base PreQ1. Zn(2+) serves as cofactor.

It carries out the reaction 7-aminomethyl-7-carbaguanine + guanosine(34) in tRNA = 7-aminomethyl-7-carbaguanosine(34) in tRNA + guanine. The protein operates within tRNA modification; tRNA-queuosine biosynthesis. Functionally, catalyzes the base-exchange of a guanine (G) residue with the queuine precursor 7-aminomethyl-7-deazaguanine (PreQ1) at position 34 (anticodon wobble position) in tRNAs with GU(N) anticodons (tRNA-Asp, -Asn, -His and -Tyr). Catalysis occurs through a double-displacement mechanism. The nucleophile active site attacks the C1' of nucleotide 34 to detach the guanine base from the RNA, forming a covalent enzyme-RNA intermediate. The proton acceptor active site deprotonates the incoming PreQ1, allowing a nucleophilic attack on the C1' of the ribose to form the product. After dissociation, two additional enzymatic reactions on the tRNA convert PreQ1 to queuine (Q), resulting in the hypermodified nucleoside queuosine (7-(((4,5-cis-dihydroxy-2-cyclopenten-1-yl)amino)methyl)-7-deazaguanosine). The polypeptide is Queuine tRNA-ribosyltransferase (Prochlorococcus marinus (strain MIT 9313)).